Consider the following 621-residue polypeptide: Chaperone protein HscA homolog (621 aa).

This sequence belongs to the heat shock protein 70 family.

Its function is as follows. Chaperone involved in the maturation of iron-sulfur cluster-containing proteins. Has a low intrinsic ATPase activity which is markedly stimulated by HscB. In Pseudomonas fluorescens (strain Pf0-1), this protein is Chaperone protein HscA homolog.